A 467-amino-acid polypeptide reads, in one-letter code: Receptor-like cytosolic serine/threonine-protein kinase RBK1 (467 aa).

The span at 1–24 (MAVEDNKNSESKNHQEVELHRNDL) shows a compositional bias: basic and acidic residues. A disordered region spans residues 1-73 (MAVEDNKNSE…PFSNTTKTVS (73 aa)). A compositionally biased stretch (low complexity) spans 40-71 (SDSDNSSSSCSSCSSDDKSSSTSSPFSNTTKT). Phosphothreonine is present on Thr-142. The region spanning 153–430 (FNPENMIGKG…LRGEDGPAEL (278 aa)) is the Protein kinase domain. Residues 159 to 167 (IGKGGHAEV) and Lys-181 contribute to the ATP site. Asp-278 acts as the Proton acceptor in catalysis. Residue Ser-282 is modified to Phosphoserine. Thr-318 carries the phosphothreonine modification. Tyr-326 carries the phosphotyrosine modification.

It belongs to the protein kinase superfamily. Ser/Thr protein kinase family. In terms of assembly, interacts with ARAC5 and ARAC10. In terms of tissue distribution, mostly expressed in vasculature, hydathode endothem, leaf mesophyll cells and trichomes.

The protein resides in the cytoplasm. The protein localises to the endomembrane system. It localises to the nucleus. The catalysed reaction is L-seryl-[protein] + ATP = O-phospho-L-seryl-[protein] + ADP + H(+). It catalyses the reaction L-threonyl-[protein] + ATP = O-phospho-L-threonyl-[protein] + ADP + H(+). This Arabidopsis thaliana (Mouse-ear cress) protein is Receptor-like cytosolic serine/threonine-protein kinase RBK1 (RBK1).